We begin with the raw amino-acid sequence, 151 residues long: SsrA-binding protein (151 aa).

The interval 124–151 (GKKLHDKRESEKERDWNRQKSRLLKAHG) is disordered. Over residues 129 to 141 (DKRESEKERDWNR) the composition is skewed to basic and acidic residues. The span at 142-151 (QKSRLLKAHG) shows a compositional bias: basic residues.

This sequence belongs to the SmpB family.

It is found in the cytoplasm. In terms of biological role, required for rescue of stalled ribosomes mediated by trans-translation. Binds to transfer-messenger RNA (tmRNA), required for stable association of tmRNA with ribosomes. tmRNA and SmpB together mimic tRNA shape, replacing the anticodon stem-loop with SmpB. tmRNA is encoded by the ssrA gene; the 2 termini fold to resemble tRNA(Ala) and it encodes a 'tag peptide', a short internal open reading frame. During trans-translation Ala-aminoacylated tmRNA acts like a tRNA, entering the A-site of stalled ribosomes, displacing the stalled mRNA. The ribosome then switches to translate the ORF on the tmRNA; the nascent peptide is terminated with the 'tag peptide' encoded by the tmRNA and targeted for degradation. The ribosome is freed to recommence translation, which seems to be the essential function of trans-translation. The protein is SsrA-binding protein of Rhizobium johnstonii (strain DSM 114642 / LMG 32736 / 3841) (Rhizobium leguminosarum bv. viciae).